The primary structure comprises 206 residues: ATP-dependent dethiobiotin synthetase BioD (206 aa).

12 to 17 (GVGKTI) lines the ATP pocket. Thr-16 provides a ligand contact to Mg(2+). The active site involves Lys-32. Residues His-46 and Glu-98 each coordinate Mg(2+). Residue 98–101 (EGAG) participates in ATP binding.

This sequence belongs to the dethiobiotin synthetase family. Homodimer. It depends on Mg(2+) as a cofactor.

The protein localises to the cytoplasm. The catalysed reaction is (7R,8S)-7,8-diammoniononanoate + CO2 + ATP = (4R,5S)-dethiobiotin + ADP + phosphate + 3 H(+). It functions in the pathway cofactor biosynthesis; biotin biosynthesis; biotin from 7,8-diaminononanoate: step 1/2. Functionally, catalyzes a mechanistically unusual reaction, the ATP-dependent insertion of CO2 between the N7 and N8 nitrogen atoms of 7,8-diaminopelargonic acid (DAPA, also called 7,8-diammoniononanoate) to form a ureido ring. The sequence is that of ATP-dependent dethiobiotin synthetase BioD from Novosphingobium aromaticivorans (strain ATCC 700278 / DSM 12444 / CCUG 56034 / CIP 105152 / NBRC 16084 / F199).